We begin with the raw amino-acid sequence, 440 residues long: 3-phosphoshikimate 1-carboxyvinyltransferase (440 aa).

The 3-phosphoshikimate site is built by lysine 29 and arginine 34. Lysine 29 lines the phosphoenolpyruvate pocket. Phosphoenolpyruvate is bound by residues glycine 99 and arginine 128. Serine 171, serine 172, glutamine 173, serine 199, aspartate 316, and lysine 343 together coordinate 3-phosphoshikimate. Position 173 (glutamine 173) interacts with phosphoenolpyruvate. Aspartate 316 (proton acceptor) is an active-site residue. Residues arginine 347, arginine 390, and lysine 416 each contribute to the phosphoenolpyruvate site.

It belongs to the EPSP synthase family. In terms of assembly, monomer.

It localises to the cytoplasm. The catalysed reaction is 3-phosphoshikimate + phosphoenolpyruvate = 5-O-(1-carboxyvinyl)-3-phosphoshikimate + phosphate. Its pathway is metabolic intermediate biosynthesis; chorismate biosynthesis; chorismate from D-erythrose 4-phosphate and phosphoenolpyruvate: step 6/7. Functionally, catalyzes the transfer of the enolpyruvyl moiety of phosphoenolpyruvate (PEP) to the 5-hydroxyl of shikimate-3-phosphate (S3P) to produce enolpyruvyl shikimate-3-phosphate and inorganic phosphate. The protein is 3-phosphoshikimate 1-carboxyvinyltransferase of Deinococcus geothermalis (strain DSM 11300 / CIP 105573 / AG-3a).